We begin with the raw amino-acid sequence, 282 residues long: 4-diphosphocytidyl-2-C-methyl-D-erythritol kinase (282 aa).

Residue lysine 11 is part of the active site. 95–105 (PMGGGVGGGSS) serves as a coordination point for ATP. Aspartate 137 is a catalytic residue.

It belongs to the GHMP kinase family. IspE subfamily.

It catalyses the reaction 4-CDP-2-C-methyl-D-erythritol + ATP = 4-CDP-2-C-methyl-D-erythritol 2-phosphate + ADP + H(+). Its pathway is isoprenoid biosynthesis; isopentenyl diphosphate biosynthesis via DXP pathway; isopentenyl diphosphate from 1-deoxy-D-xylulose 5-phosphate: step 3/6. Catalyzes the phosphorylation of the position 2 hydroxy group of 4-diphosphocytidyl-2C-methyl-D-erythritol. The chain is 4-diphosphocytidyl-2-C-methyl-D-erythritol kinase from Haemophilus ducreyi (strain 35000HP / ATCC 700724).